A 55-amino-acid chain; its full sequence is Large ribosomal subunit protein bL33 (55 aa).

It belongs to the bacterial ribosomal protein bL33 family.

This Rhizorhabdus wittichii (strain DSM 6014 / CCUG 31198 / JCM 15750 / NBRC 105917 / EY 4224 / RW1) (Sphingomonas wittichii) protein is Large ribosomal subunit protein bL33.